The sequence spans 125 residues: Transmembrane protein 14EP (125 aa).

2 helical membrane-spanning segments follow: residues valine 9–glycine 29 and isoleucine 81–serine 101.

This sequence belongs to the TMEM14 family.

The protein resides in the membrane. The chain is Transmembrane protein 14EP (TMEM14EP) from Homo sapiens (Human).